Consider the following 416-residue polypeptide: Putative UV-damage repair protein UvrX (416 aa).

The UmuC domain maps to 12–196 (ILCVDMKSFY…RPLSKMWGIG (185 aa)). Mg(2+)-binding residues include aspartate 16 and aspartate 115. Glutamate 116 is an active-site residue.

Belongs to the DNA polymerase type-Y family. The cofactor is Mg(2+).

In Bacillus subtilis (strain 168), this protein is Putative UV-damage repair protein UvrX (uvrX).